The following is a 224-amino-acid chain: UPF0173 metal-dependent hydrolase EAT1b_0495 (224 aa).

This sequence belongs to the UPF0173 family.

This is UPF0173 metal-dependent hydrolase EAT1b_0495 from Exiguobacterium sp. (strain ATCC BAA-1283 / AT1b).